Consider the following 91-residue polypeptide: DNA-binding protein HU (91 aa).

It belongs to the bacterial histone-like protein family.

Histone-like DNA-binding protein which is capable of wrapping DNA to stabilize it, and thus to prevent its denaturation under extreme environmental conditions. This Clostridium pasteurianum protein is DNA-binding protein HU (hup).